The following is a 501-amino-acid chain: Dipeptide and tripeptide permease A (501 aa).

Topologically, residues 1 to 34 (MSTANNNQPESISMNAFKQPKAFYLIFSIELWER) are cytoplasmic. The helical transmembrane segment at 35-55 (FGYYGLQGIMAVYLVKMLGMS) threads the bilayer. Topologically, residues 56–59 (EADS) are periplasmic. The helical transmembrane segment at 60–80 (ITLFSSFSALVYGFVAIGGWL) threads the bilayer. Topologically, residues 81–89 (GDKVLGAKR) are cytoplasmic. 2 helical membrane passes run 90-110 (VIVL…YSGH) and 111-131 (EIFW…LFKA). Over 132–153 (NPSSLLSTCYSKDDPRLDGAFT) the chain is Periplasmic. Residues 154–174 (MYYMSINIGSFFSMLATPWLA) form a helical membrane-spanning segment. The Cytoplasmic portion of the chain corresponds to 175–178 (AKYG). The helical transmembrane segment at 179–199 (WSVAFSLSVVGMLITLVNFWF) threads the bilayer. The Periplasmic portion of the chain corresponds to 200–220 (CRKWVKNQGSKPDFLPLQFKK). The chain crosses the membrane as a helical span at residues 221–241 (LLMVLVGIIALITLSNWLLHN). At 242-246 (QIIAR) the chain is on the cytoplasmic side. Residues 247 to 267 (WALALVSLGIIFIFTKETLFL) traverse the membrane as a helical segment. At 268 to 274 (QGIARRR) the chain is on the periplasmic side. A helical membrane pass occupies residues 275–295 (MIVAFLLMLEAVIFFVLYSQM). The Cytoplasmic segment spans residues 296-320 (PTSLNFFAIHNVEHSIFGIGFEPEQ). The chain crosses the membrane as a helical span at residues 321–341 (FQALNPFWIMLASPILAAIYN). Over 342-352 (KMGDRLPMPHK) the chain is Periplasmic. The helical transmembrane segment at 353–373 (FAFGMMLCSAAFLVLPWGASF) threads the bilayer. Over 374 to 383 (ANEHGIVSVN) the chain is Cytoplasmic. A helical transmembrane segment spans residues 384-404 (WLILSYALQSIGELMISGLGL). Residues 405 to 414 (AMVAQLVPQR) are Periplasmic-facing. Residues 415-435 (LMGFIMGSWFLTTAAAALIAG) form a helical membrane-spanning segment. Residues 436–460 (KVAALTAVPSDAITDAHASLAIYSH) are Cytoplasmic-facing. A helical membrane pass occupies residues 461–481 (VFMQIGIVTAIIAVLMMLTAP). Topologically, residues 482 to 501 (KLYRMTLAPSDHNDVKIMTQ) are periplasmic.

Belongs to the major facilitator superfamily. Proton-dependent oligopeptide transporter (POT/PTR) (TC 2.A.17) family. DtpA subfamily.

The protein localises to the cell inner membrane. In terms of biological role, proton-dependent permease that transports di- and tripeptides. This is Dipeptide and tripeptide permease A from Yersinia pestis.